The sequence spans 612 residues: Apoptosis-inducing factor 1, mitochondrial (612 aa).

Short sequence motifs (mitochondrial localization signal) lie at residues 1 to 30 (MFRC…PKQR) and 62 to 88 (KMDN…KTIK). A mitochondrion-targeting transit peptide spans 1–53 (MFRCGGLAGAFKQKLVPLVRSVCVQRPKQRNRLPGNLFQQWRVPLELQMARQM). 2 propeptides (removed in mature form) span residues 54–100 (ASSG…RIMG) and 55–101 (SSGP…IMGL). Lysine 108 carries the post-translational modification N6-succinyllysine. Position 115 is a phosphoserine (serine 115). The FAD-dependent oxidoreductase stretch occupies residues 133–482 (FLLIGGGTAA…KPYWHQSMFW (350 aa)). FAD-binding positions include 137 to 141 (GGGTA), 163 to 164 (ED), arginine 171, and lysine 176. Tryptophan 195 provides a ligand contact to NAD(+). Position 232 (valine 232) interacts with FAD. A Glycyl lysine isopeptide (Lys-Gly) (interchain with G-Cter in ubiquitin) cross-link involves residue lysine 254. Serine 267 carries the post-translational modification Phosphoserine. Arginine 284 contacts FAD. NAD(+) contacts are provided by residues 307–310 (GGFL), glutamate 335, and lysine 341. Serine 370 is subject to Phosphoserine. The residue at position 387 (lysine 387) is an N6-acetyllysine. Position 398 (glycine 398) interacts with NAD(+). An FAD-binding site is contributed by aspartate 437. Positions 445 to 450 (KLGRRR) match the Nuclear localization signal motif. NAD(+) is bound by residues 452–453 (EH), tryptophan 482, and glutamate 492. FAD contacts are provided by residues 453–454 (HH) and tryptophan 482. Polar residues predominate over residues 512-528 (AQDNPKSATEQSGTGIR). Residues 512 to 551 (AQDNPKSATEQSGTGIRSESETESEASEITIPPSDPAVPQ) form a disordered region. Threonine 520 carries the post-translational modification Phosphothreonine. Phosphoserine is present on residues serine 523 and serine 529. Residue asparagine 582 participates in NAD(+) binding. N6-acetyllysine is present on lysine 592.

This sequence belongs to the FAD-dependent oxidoreductase family. In terms of assembly, monomer (oxidized form). Homodimer (reduced form). Upon reduction with NADH, undergoes dimerization and forms tight, long-lived FADH2-NAD charge transfer complexes (CTC) resistant to oxidation. Also dimerizes with isoform 3 preventing its release from mitochondria. Interacts with XIAP/BIRC4. Interacts (via N-terminus) with EIF3G (via C-terminus). Interacts with PRELID1. Interacts with CHCHD4; the interaction increases in presence of NADH. Interacts with processed form of PARP1 (Poly [ADP-ribose] polymerase 1, processed C-terminus); interaction is mediated with poly-ADP-ribose chains attached to PARP1, promoting translocation into the nucleus. FAD is required as a cofactor. Post-translationally, under normal conditions, a 54-residue N-terminal segment is first proteolytically removed during or just after translocation into the mitochondrial intermembrane space (IMS) by the mitochondrial processing peptidase (MPP) to form the inner-membrane-anchored mature form (AIFmit). During apoptosis, it is further proteolytically processed at amino-acid position 101 leading to the generation of the mature form, which is confined to the mitochondrial IMS in a soluble form (AIFsol). AIFsol is released to the cytoplasm in response to specific death signals, and translocated to the nucleus, where it induces nuclear apoptosis in a caspase-independent manner. In terms of processing, ubiquitination by XIAP/BIRC4 does not lead to proteasomal degradation. Ubiquitination at Lys-254 by XIAP/BIRC4 blocks its ability to bind DNA and induce chromatin degradation, thereby inhibiting its ability to induce cell death.

It localises to the mitochondrion intermembrane space. Its subcellular location is the mitochondrion inner membrane. The protein resides in the cytoplasm. It is found in the nucleus. The protein localises to the perinuclear region. The catalysed reaction is A + NADH + H(+) = AH2 + NAD(+). Functionally, functions both as NADH oxidoreductase and as regulator of apoptosis. In response to apoptotic stimuli, it is released from the mitochondrion intermembrane space into the cytosol and to the nucleus, where it functions as a proapoptotic factor in a caspase-independent pathway. Release into the cytoplasm is mediated upon binding to poly-ADP-ribose chains. The soluble form (AIFsol) found in the nucleus induces 'parthanatos' i.e. caspase-independent fragmentation of chromosomal DNA. Binds to DNA in a sequence-independent manner. Interacts with EIF3G, and thereby inhibits the EIF3 machinery and protein synthesis, and activates caspase-7 to amplify apoptosis. Plays a critical role in caspase-independent, pyknotic cell death in hydrogen peroxide-exposed cells. In contrast, participates in normal mitochondrial metabolism. Plays an important role in the regulation of respiratory chain biogenesis by interacting with CHCHD4 and controlling CHCHD4 mitochondrial import. The protein is Apoptosis-inducing factor 1, mitochondrial (Aifm1) of Rattus norvegicus (Rat).